Here is a 397-residue protein sequence, read N- to C-terminus: MAKASFERTKPHVNIGTIGHVDHGKTTLTAAITKVLADQYPDLNEARAFDQVDNAPEEKERGITINVSHVEYQTEKRHYAHVDAPGHADYVKNMITGAAQMDGAILVVAATDGPMPQTREHVLLARQVGVPYIVVALNKSDMVDDEELLELVEFEVRDLLSSQDFDGDNAPVIPVSALKALEGDEKWVKSVQDLMAAVDDNVPEPERDVDKPFLMPVEDVFTITGRGTVVTGRVERGVLLPNDEIEIVGIKEKSSKTTVTAIEMFRKTLPDARAGENVGLLLRGTKREDVERGQVIVKPGSITPHTKFEAQVYILSKDEGGRHNPFYSNYRPQFYFRTTDVTGVITLPEGTEMVMPGDNTDMSVELIQPIAMEDRLRFAIREGGRTVGAGRVTKITA.

One can recognise a tr-type G domain in the interval 10–206 (KPHVNIGTIG…AVDDNVPEPE (197 aa)). The interval 19–26 (GHVDHGKT) is G1. GTP is bound at residue 19 to 26 (GHVDHGKT). A Mg(2+)-binding site is contributed by threonine 26. A G2 region spans residues 62-66 (GITIN). The segment at 83–86 (DAPG) is G3. Residues 83–87 (DAPGH) and 138–141 (NKSD) contribute to the GTP site. Residues 138–141 (NKSD) form a G4 region. Residues 176-178 (SAL) are G5.

This sequence belongs to the TRAFAC class translation factor GTPase superfamily. Classic translation factor GTPase family. EF-Tu/EF-1A subfamily. In terms of assembly, monomer.

It is found in the cytoplasm. The catalysed reaction is GTP + H2O = GDP + phosphate + H(+). In terms of biological role, GTP hydrolase that promotes the GTP-dependent binding of aminoacyl-tRNA to the A-site of ribosomes during protein biosynthesis. The sequence is that of Elongation factor Tu from Brevibacterium linens.